The following is a 77-amino-acid chain: Large ribosomal subunit protein eL14 (77 aa).

It belongs to the eukaryotic ribosomal protein eL14 family.

The polypeptide is Large ribosomal subunit protein eL14 (Methanococcus vannielii (strain ATCC 35089 / DSM 1224 / JCM 13029 / OCM 148 / SB)).